The chain runs to 1297 residues: Phosphoribosylformylglycinamidine synthase (1297 aa).

The segment at 304-323 (PFPGAATGSGGEIRDEGATG) is disordered. ATP contacts are provided by residues 307-318 (GAATGSGGEIRD) and alanine 678. Residues aspartate 679, glutamate 718, asparagine 722, and aspartate 886 each contribute to the Mg(2+) site. An ATP-binding site is contributed by serine 888. Residues 1043 to 1297 (RIAILREQGV…LFQNARVALG (255 aa)) enclose the Glutamine amidotransferase type-1 domain. The active-site Nucleophile is cysteine 1137. Residues histidine 1262 and glutamate 1264 contribute to the active site.

The protein in the N-terminal section; belongs to the FGAMS family. As to quaternary structure, monomer.

The protein resides in the cytoplasm. It catalyses the reaction N(2)-formyl-N(1)-(5-phospho-beta-D-ribosyl)glycinamide + L-glutamine + ATP + H2O = 2-formamido-N(1)-(5-O-phospho-beta-D-ribosyl)acetamidine + L-glutamate + ADP + phosphate + H(+). The protein operates within purine metabolism; IMP biosynthesis via de novo pathway; 5-amino-1-(5-phospho-D-ribosyl)imidazole from N(2)-formyl-N(1)-(5-phospho-D-ribosyl)glycinamide: step 1/2. Its function is as follows. Phosphoribosylformylglycinamidine synthase involved in the purines biosynthetic pathway. Catalyzes the ATP-dependent conversion of formylglycinamide ribonucleotide (FGAR) and glutamine to yield formylglycinamidine ribonucleotide (FGAM) and glutamate. In Histophilus somni (strain 129Pt) (Haemophilus somnus), this protein is Phosphoribosylformylglycinamidine synthase.